Reading from the N-terminus, the 139-residue chain is DNA-directed RNA polymerase II subunit Rpb4 (139 aa).

It belongs to the eukaryotic RPB4 RNA polymerase subunit family. In terms of assembly, RNA polymerase II consists of 12 different subunits.

Its subcellular location is the nucleus. It localises to the chromosome. Its function is as follows. DNA-dependent RNA polymerase catalyzes the transcription of DNA into RNA using the four ribonucleoside triphosphates as substrates. Associates with POLR2G. The polypeptide is DNA-directed RNA polymerase II subunit Rpb4 (Drosophila melanogaster (Fruit fly)).